The primary structure comprises 156 residues: CRIB domain-containing protein RIC11 (156 aa).

The CRIB domain occupies 26–39; sequence IGHPTEVKHVAHIG. The segment at 87–156 is disordered; it reads QDQLNISDRI…SMVSRLNSNA (70 aa). The span at 109 to 120 shows a compositional bias: basic residues; the sequence is IHTKSKNRRKKP. Residues 121–142 show a composition bias toward low complexity; the sequence is SSTSSPRSRPSPKSSRSMGLSK.

Functions as a downstream effector of Rho-related GTP binding proteins of the 'Rho of Plants' (ROPs) family. Participates in the propagation of ROP GTPase signals in specific cellular responses. The sequence is that of CRIB domain-containing protein RIC11 (RIC11) from Arabidopsis thaliana (Mouse-ear cress).